A 472-amino-acid polypeptide reads, in one-letter code: MALNLTTSRRALGSLKPLTRAAFVGARGYATAEPDLKATLREAIPAKRELLKKVKAHANKTIGEVKVENTLGGMRGLKAMVWEGSVLDANEGIRFHGRTIKDCQKELPKGKTGTEMLPEAMFWLLLTGQVPSTNQIRVFSRELAEKAQIPEFVAKMLDNFPKDLHPMTQFAMAVSALNYESKFAKAYEQGLNKADYWEPTFDDCISLLAKLPTIAAKIYQNSYRGGGALPAEVDLEQDWSYNFAAMLGKGGKENENFQDLLRLYLALHGDHEGGNVSAHATHLVGSALSDPFLSYSAGLQGLAGPLHGLAAQEVLRWILQMKEAIPAKYTEQDVNDYLWSTLNSGRVVPGYGHAVLRKPDPRFEALMDYAAARPEIAQDPVFQLVQKNSQIAPEVLKKHGKTKNPYPNVDSSSGVLFHHYGFHETLYYTATFGVSRGLGPLAQLVWDRALGLPIERPKSINLEGILKQVEGQ.

Residues 1-29 (MALNLTTSRRALGSLKPLTRAAFVGARGY) constitute a mitochondrion transit peptide. CoA is bound by residues Arg75 and Lys193. His271 lines the oxaloacetate pocket. Leu306 serves as a coordination point for CoA. His307 is a catalytic residue. Val348, Gly350, and Tyr351 together coordinate CoA. The oxaloacetate site is built by His353 and Arg362. His353 is a catalytic residue. Thr402, Lys403, and Asn408 together coordinate CoA. The active site involves Asp410. The oxaloacetate site is built by Arg436 and Arg456.

It belongs to the citrate synthase family. As to quaternary structure, homodimer.

The protein resides in the mitochondrion matrix. It carries out the reaction propanoyl-CoA + oxaloacetate + H2O = (2S,3S)-2-methylcitrate + CoA + H(+). The catalysed reaction is oxaloacetate + acetyl-CoA + H2O = citrate + CoA + H(+). It participates in organic acid metabolism; propanoate degradation. Its function is as follows. Component of the methylcitrate cycle that catalyzes the synthesis of (2S,3S)-2-methylcitrate from propionyl-CoA and oxaloacetate. Plays an important role in detoxification of propionyl-CoA, an inhibitor of both primary and secondary metabolism. Also has citrate synthase activity using as substrates acetyl-CoA and oxaloacetate. This chain is 2-methylcitrate synthase, mitochondrial, found in Fusarium solani (Filamentous fungus).